The chain runs to 318 residues: Deoxyribose-phosphate aldolase (318 aa).

Aspartate 155 acts as the Proton donor/acceptor in catalysis. Lysine 218 serves as the catalytic Schiff-base intermediate with acetaldehyde. The active-site Proton donor/acceptor is lysine 254.

This sequence belongs to the DeoC/FbaB aldolase family. DeoC type 2 subfamily. In terms of assembly, interacts with YBX1.

The protein resides in the cytoplasm. Its subcellular location is the cytoplasmic granule. It is found in the nucleus. It carries out the reaction 2-deoxy-D-ribose 5-phosphate = D-glyceraldehyde 3-phosphate + acetaldehyde. The protein operates within carbohydrate degradation; 2-deoxy-D-ribose 1-phosphate degradation; D-glyceraldehyde 3-phosphate and acetaldehyde from 2-deoxy-alpha-D-ribose 1-phosphate: step 2/2. Catalyzes a reversible aldol reaction between acetaldehyde and D-glyceraldehyde 3-phosphate to generate 2-deoxy-D-ribose 5-phosphate. Participates in stress granule (SG) assembly. May allow ATP production from extracellular deoxyinosine in conditions of energy deprivation. In Bos taurus (Bovine), this protein is Deoxyribose-phosphate aldolase (DERA).